The primary structure comprises 63 residues: Lysis protein (63 aa).

A helical transmembrane segment spans residues 21–43 (LYVWIALAIVLSDFTSIFSHWIW).

This sequence belongs to the Leviviricetes lysis protein family.

The protein localises to the host cell inner membrane. It localises to the host cell outer membrane. In terms of biological role, induces the formation of specific membrane adhesion sites between the inner and outer membranes, apparently leading to host cell lysis. Lysis may be performed via activation of host murein hydrolases. The chain is Lysis protein from Escherichia coli (Bacteriophage JP34).